Here is a 239-residue protein sequence, read N- to C-terminus: MLIHTKAIIISALKYGEADLIVKAYTLSDGLCTYMLKGVLKSRKGKFKASMFQSLTQLEIVANHRGGGKMEYLKEAKVTGNYQSLHTHPIKLAMVMFLAEMLRNAIREEESNEPLFHYLEYSFQFLDSTDKIANFHLLFLLNLTRYLGFQPEMGIKDLPVFNLLDGIFQDFSSNDYCIEGKNVDLLKSFLGTDFDALQYIKMNQTSRNDFLSMLLLYYELHIEGFRKPKSLSVLNEIFG.

It belongs to the RecO family.

Its function is as follows. Involved in DNA repair and RecF pathway recombination. The chain is DNA repair protein RecO from Christiangramia forsetii (strain DSM 17595 / CGMCC 1.15422 / KT0803) (Gramella forsetii).